We begin with the raw amino-acid sequence, 455 residues long: Argininosuccinate lyase (455 aa).

Belongs to the lyase 1 family. Argininosuccinate lyase subfamily.

The protein resides in the cytoplasm. The catalysed reaction is 2-(N(omega)-L-arginino)succinate = fumarate + L-arginine. Its pathway is amino-acid biosynthesis; L-arginine biosynthesis; L-arginine from L-ornithine and carbamoyl phosphate: step 3/3. The chain is Argininosuccinate lyase from Caulobacter sp. (strain K31).